Reading from the N-terminus, the 103-residue chain is Large ribosomal subunit protein uL23 (103 aa).

It belongs to the universal ribosomal protein uL23 family. As to quaternary structure, part of the 50S ribosomal subunit. Contacts protein L29, and trigger factor when it is bound to the ribosome.

Its function is as follows. One of the early assembly proteins it binds 23S rRNA. One of the proteins that surrounds the polypeptide exit tunnel on the outside of the ribosome. Forms the main docking site for trigger factor binding to the ribosome. The polypeptide is Large ribosomal subunit protein uL23 (Chlorobium luteolum (strain DSM 273 / BCRC 81028 / 2530) (Pelodictyon luteolum)).